The primary structure comprises 279 residues: Probable endonuclease 4 (279 aa).

Residues His-69, His-109, Glu-145, Asp-179, His-182, His-216, Asp-229, His-231, and Glu-261 each coordinate Zn(2+).

It belongs to the AP endonuclease 2 family. Zn(2+) is required as a cofactor.

The enzyme catalyses Endonucleolytic cleavage to 5'-phosphooligonucleotide end-products.. Endonuclease IV plays a role in DNA repair. It cleaves phosphodiester bonds at apurinic or apyrimidinic (AP) sites, generating a 3'-hydroxyl group and a 5'-terminal sugar phosphate. In Tolumonas auensis (strain DSM 9187 / NBRC 110442 / TA 4), this protein is Probable endonuclease 4.